The chain runs to 301 residues: MKIFNTIQSVLFAAFFLKQGNCLASNGSTALMGEVDMQTPFPEWLTEFTNLTQWPGIDPPYIPLDYINLTEVPELDRYYPGQCPKISREQCSFDCYNCIDVDDVTSCFKLSQTFDDGPAPATEALLKKLRQRTTFFVLGINTVNYPDIYEHILERGHLIGTHTWSHEFLPSLSNEEIVAQIEWSIWAMNATGKHFPKYFRPPYGAIDNRVRAIVKQFGLTVVLWDLDTFDWKLITNDDFRTEEEILMDINTWKGKRKGLILEHDGARRTVEVAIKINELIGSDQLTIAECIGDTDYIERYD.

An N-terminal signal peptide occupies residues 1–24 (MKIFNTIQSVLFAAFFLKQGNCLA). Asn-26, Asn-50, and Asn-68 each carry an N-linked (GlcNAc...) asparagine glycan. Cys-107 and Cys-290 are oxidised to a cystine. The 181-residue stretch at 108–288 (FKLSQTFDDG…LIGSDQLTIA (181 aa)) folds into the NodB homology domain. Asp-115 acts as the Proton acceptor in catalysis. Acetate is bound at residue Asp-115. Co(2+) is bound by residues Asp-116, His-162, and His-166. A glycan (N-linked (GlcNAc...) asparagine) is linked at Asn-189. Acetate is bound at residue Tyr-203. Catalysis depends on His-263, which acts as the Proton donor.

It belongs to the polysaccharide deacetylase family. Requires Co(2+) as cofactor.

It localises to the prospore. It catalyses the reaction [(1-&gt;4)-N-acetyl-beta-D-glucosaminyl](n) + n H2O = chitosan + n acetate. Hydrolyzes the N-acetamido groups of N-acetyl-D-glucosamine residues in chitin to form chitosan and acetate. Chitosan is a component of the spore wall. In Saccharomyces cerevisiae (strain ATCC 204508 / S288c) (Baker's yeast), this protein is Chitin deacetylase 1.